Consider the following 67-residue polypeptide: Small ribosomal subunit protein bS21 (67 aa).

It belongs to the bacterial ribosomal protein bS21 family.

In Hydrogenobaculum sp. (strain Y04AAS1), this protein is Small ribosomal subunit protein bS21.